Reading from the N-terminus, the 427-residue chain is Serine hydroxymethyltransferase (427 aa).

Residues leucine 117 and 121–123 each bind (6S)-5,6,7,8-tetrahydrofolate; that span reads GHL. Lysine 226 carries the N6-(pyridoxal phosphate)lysine modification.

Belongs to the SHMT family. In terms of assembly, homodimer. The cofactor is pyridoxal 5'-phosphate.

Its subcellular location is the cytoplasm. It catalyses the reaction (6R)-5,10-methylene-5,6,7,8-tetrahydrofolate + glycine + H2O = (6S)-5,6,7,8-tetrahydrofolate + L-serine. The enzyme catalyses L-threonine = acetaldehyde + glycine. It carries out the reaction L-allo-threonine = acetaldehyde + glycine. The protein operates within one-carbon metabolism; tetrahydrofolate interconversion. Its pathway is amino-acid biosynthesis; glycine biosynthesis; glycine from L-serine: step 1/1. Its primary function is to catalyze the reversible interconversion of serine and glycine with tetrahydrofolate (THF) serving as the one-carbon carrier. This reaction serves as the major source of one-carbon groups required for the biosynthesis of purines, thymidylate, methionine, and other important biomolecules. Also exhibits THF-independent aldolase activity toward beta-hydroxyamino acids, producing glycine and aldehydes, via a retro-aldol mechanism. Thus, is able to catalyze the cleavage of L-threonine, L-allo-threonine, L-threo-beta-phenylserine and L-erythro-beta-phenylserine. This second activity is likely to be physiological in H.thermophilus, which is an organism that lacks the ortholog gene for the 'real' threonine aldolase characterized in mesophilic bacteria (LtaE), yeast and plants. This Hydrogenobacter thermophilus (strain DSM 6534 / IAM 12695 / TK-6) protein is Serine hydroxymethyltransferase.